A 396-amino-acid polypeptide reads, in one-letter code: Phosphoglycerate kinase (396 aa).

Substrate-binding positions include 21–23, R36, 59–62, R118, and R151; these read DFN and HFDR. Residues K201, E323, and 353–356 contribute to the ATP site; that span reads GGDT.

Belongs to the phosphoglycerate kinase family. In terms of assembly, monomer.

The protein resides in the cytoplasm. The catalysed reaction is (2R)-3-phosphoglycerate + ATP = (2R)-3-phospho-glyceroyl phosphate + ADP. It participates in carbohydrate degradation; glycolysis; pyruvate from D-glyceraldehyde 3-phosphate: step 2/5. This chain is Phosphoglycerate kinase, found in Caulobacter sp. (strain K31).